A 189-amino-acid chain; its full sequence is Peptidyl-tRNA hydrolase (189 aa).

Residue tyrosine 14 coordinates tRNA. Histidine 19 acts as the Proton acceptor in catalysis. TRNA is bound by residues tyrosine 64, asparagine 66, and asparagine 112.

This sequence belongs to the PTH family. As to quaternary structure, monomer.

It is found in the cytoplasm. The enzyme catalyses an N-acyl-L-alpha-aminoacyl-tRNA + H2O = an N-acyl-L-amino acid + a tRNA + H(+). Functionally, hydrolyzes ribosome-free peptidyl-tRNAs (with 1 or more amino acids incorporated), which drop off the ribosome during protein synthesis, or as a result of ribosome stalling. Catalyzes the release of premature peptidyl moieties from peptidyl-tRNA molecules trapped in stalled 50S ribosomal subunits, and thus maintains levels of free tRNAs and 50S ribosomes. The polypeptide is Peptidyl-tRNA hydrolase (Clostridium botulinum (strain Langeland / NCTC 10281 / Type F)).